The following is a 138-amino-acid chain: Small ribosomal subunit protein uS11c (138 aa).

Residues 1–23 form a disordered region; the sequence is MAKPIPRIGSRRNGRIGSRKSAR. A compositionally biased stretch (basic residues) spans 9-23; the sequence is GSRRNGRIGSRKSAR.

The protein belongs to the universal ribosomal protein uS11 family. In terms of assembly, part of the 30S ribosomal subunit.

It localises to the plastid. It is found in the chloroplast. In Vitis vinifera (Grape), this protein is Small ribosomal subunit protein uS11c.